Reading from the N-terminus, the 236-residue chain is Ribonuclease 3 (236 aa).

Residues 7 to 136 enclose the RNase III domain; sequence KSYILKKFNI…FIGALYLDQG (130 aa). Glutamate 49 provides a ligand contact to Mg(2+). Aspartate 53 is a catalytic residue. Mg(2+) contacts are provided by aspartate 122 and glutamate 125. The active site involves glutamate 125. A DRBM domain is found at 162–232; that stretch reads DFKSRLQERL…ARAALKILED (71 aa).

This sequence belongs to the ribonuclease III family. Homodimer. The cofactor is Mg(2+).

The protein resides in the cytoplasm. The enzyme catalyses Endonucleolytic cleavage to 5'-phosphomonoester.. Its function is as follows. Digests double-stranded RNA. Involved in the processing of primary rRNA transcript to yield the immediate precursors to the large and small rRNAs (23S and 16S). Processes some mRNAs, and tRNAs when they are encoded in the rRNA operon. Processes pre-crRNA and tracrRNA of type II CRISPR loci if present in the organism. This Leuconostoc mesenteroides subsp. mesenteroides (strain ATCC 8293 / DSM 20343 / BCRC 11652 / CCM 1803 / JCM 6124 / NCDO 523 / NBRC 100496 / NCIMB 8023 / NCTC 12954 / NRRL B-1118 / 37Y) protein is Ribonuclease 3.